Consider the following 384-residue polypeptide: Alcohol dehydrogenase class-3 (384 aa).

Cys48, His70, Cys100, Cys103, Cys106, Cys114, and Cys177 together coordinate Zn(2+).

It belongs to the zinc-containing alcohol dehydrogenase family. Class-III subfamily. As to quaternary structure, homodimer. It depends on Zn(2+) as a cofactor.

The protein resides in the cytoplasm. The catalysed reaction is a primary alcohol + NAD(+) = an aldehyde + NADH + H(+). The enzyme catalyses a secondary alcohol + NAD(+) = a ketone + NADH + H(+). It carries out the reaction S-(hydroxymethyl)glutathione + NADP(+) = S-formylglutathione + NADPH + H(+). It catalyses the reaction S-(hydroxymethyl)glutathione + NAD(+) = S-formylglutathione + NADH + H(+). In terms of biological role, class-III ADH is remarkably ineffective in oxidizing ethanol, but it readily catalyzes the oxidation of long-chain primary alcohols and the oxidation of S-(hydroxymethyl) glutathione. Plays a role in the calcium flux to the cytoplasm in the ASJ sensory neurons upon removal of a nitric oxide stimulus. This Caenorhabditis elegans protein is Alcohol dehydrogenase class-3.